Consider the following 61-residue polypeptide: Small ribosomal subunit protein uS14 (61 aa).

The Zn(2+) site is built by Cys24, Cys27, Cys40, and Cys43.

Belongs to the universal ribosomal protein uS14 family. Zinc-binding uS14 subfamily. Part of the 30S ribosomal subunit. Contacts proteins S3 and S10. Zn(2+) is required as a cofactor.

In terms of biological role, binds 16S rRNA, required for the assembly of 30S particles and may also be responsible for determining the conformation of the 16S rRNA at the A site. This is Small ribosomal subunit protein uS14 from Thermotoga neapolitana (strain ATCC 49049 / DSM 4359 / NBRC 107923 / NS-E).